Reading from the N-terminus, the 154-residue chain is Low molecular weight protein-tyrosine-phosphatase PtpA (154 aa).

The Nucleophile role is filled by C8. The active site involves R14. D120 serves as the catalytic Proton donor.

The protein belongs to the low molecular weight phosphotyrosine protein phosphatase family. In terms of assembly, interacts with host CORO1A. In terms of processing, phosphorylations at Tyr-122 and Tyr-123 are essential for phosphatase activity.

It localises to the secreted. It catalyses the reaction O-phospho-L-tyrosyl-[protein] + H2O = L-tyrosyl-[protein] + phosphate. In terms of biological role, secreted tyrosine phosphatase that plays a critical role during infection as a bacterial effector protein that counteracts host defenses. Required for intramacrophage survival. This is Low molecular weight protein-tyrosine-phosphatase PtpA (ptpA) from Staphylococcus aureus (strain MSSA476).